The primary structure comprises 1229 residues: Nuclear envelope pore membrane protein POM 121C (1229 aa).

Over residues 1–10 (MSPAAAAAGA) the composition is skewed to low complexity. The tract at residues 1 to 24 (MSPAAAAAGAGERRRPIASVRDGR) is disordered. The segment at 1–40 (MSPAAAAAGAGERRRPIASVRDGRGRGCGGPAGAALLGLS) is cisternal side. The segment at 1–398 (MSPAAAAAGA…AITSSYSSTR (398 aa)) is required for targeting to the nucleus and nuclear pore complex. A compositionally biased stretch (basic and acidic residues) spans 11-24 (GERRRPIASVRDGR). The helical transmembrane segment at 41 to 61 (LVGLLLYLVPAAAALAWLAVG) threads the bilayer. A pore side region spans residues 62 to 1229 (TTAAWWGLSR…QARRQHTRKK (1168 aa)). A Phosphoserine modification is found at serine 81. Disordered stretches follow at residues 90–200 (RTLF…LPDR), 296–507 (KKKK…LGYS), 579–747 (KKMQ…TAPT), 936–966 (PLPSYPGANPQPAFGAAEGQPPGAAKPALTP), and 1202–1229 (PSFSIGAGSKTPGARQRLQARRQHTRKK). Residues 155 to 166 (ARPAPRSTPPSQ) are compositionally biased toward pro residues. The span at 176–189 (PSLPTPLLRPSGRP) shows a compositional bias: low complexity. 5 positions are modified to phosphoserine: serine 322, serine 328, serine 348, serine 370, and serine 373. Polar residues predominate over residues 374-400 (LTGAYTSGIPSSSRNAITSSYSSTRGI). A compositionally biased stretch (low complexity) spans 409 to 422 (PSSSPFSSPASSRS). Composition is skewed to basic and acidic residues over residues 427–439 (RPAKKIREEELCH) and 449–463 (ADKESQGEKAADTTP). Positions 468–479 (NSNSQSTPGSSG) are enriched in polar residues. Residues 612-629 (PPLGLSQSGPPGLLPSPS) show a composition bias toward low complexity. The segment covering 660-673 (QAETATKPQATSAP) has biased composition (polar residues). Composition is skewed to low complexity over residues 689–703 (SPSSPAAPAASSASP) and 726–747 (SVSATAPSSSSLPTTTSTTAPT). Over residues 1219–1229 (LQARRQHTRKK) the composition is skewed to basic residues.

Belongs to the POM121 family.

The protein resides in the nucleus. Its subcellular location is the nuclear pore complex. It is found in the nucleus membrane. The protein localises to the endoplasmic reticulum membrane. Essential component of the nuclear pore complex (NPC). The repeat-containing domain may be involved in anchoring components of the pore complex to the pore membrane. When overexpressed in cells induces the formation of cytoplasmic annulate lamellae (AL). The protein is Nuclear envelope pore membrane protein POM 121C (POM121C) of Homo sapiens (Human).